The primary structure comprises 431 residues: Adenylosuccinate synthetase (431 aa).

Residues 13–19 (GDEGKGK) and 41–43 (GHT) each bind GTP. Asp14 serves as the catalytic Proton acceptor. Residues Asp14 and Gly41 each coordinate Mg(2+). IMP-binding positions include 14 to 17 (DEGK), 39 to 42 (NAGH), Thr130, Arg144, Gln225, Thr240, and Arg304. His42 serves as the catalytic Proton donor. Residue 300–306 (TTTGRSR) participates in substrate binding. GTP is bound by residues Arg306, 332–334 (KLD), and 414–416 (STG).

The protein belongs to the adenylosuccinate synthetase family. As to quaternary structure, homodimer. Requires Mg(2+) as cofactor.

The protein resides in the cytoplasm. It carries out the reaction IMP + L-aspartate + GTP = N(6)-(1,2-dicarboxyethyl)-AMP + GDP + phosphate + 2 H(+). The protein operates within purine metabolism; AMP biosynthesis via de novo pathway; AMP from IMP: step 1/2. Plays an important role in the de novo pathway of purine nucleotide biosynthesis. Catalyzes the first committed step in the biosynthesis of AMP from IMP. This chain is Adenylosuccinate synthetase, found in Marinobacter nauticus (strain ATCC 700491 / DSM 11845 / VT8) (Marinobacter aquaeolei).